Reading from the N-terminus, the 370-residue chain is MVKVLAVLYDGGEHAKQVPGLLGTTENELGLRKWLEDQGHTLVTTSDKDREGSTFDRELEDAEIIITTPFHPGYLTAERLARAKKLKLAVTAGIGSDHVDLDAANKTNGGITVAEVTGSNVVSVAEHVVMTILVLVRNFVPAHEQIEAGRWDVAEVAKDEYDLEGKVVGTVGVGRIGERVLRRLKGFDCKELLYYDYQPLSPEKEKEIGCRRVENLEEMLAQCDVVTINCPLHESTRGLFNKDLISKMKRGSWLVNTARGAIVVKEDVAEALRTGHLRGYGGDVWFPQPAPADHVLRTAKNPFGGGNAMVPHMSGTSLDAQKRYAEGVKRILDSYLSGRFDYRPEDLIVHQGKYATRAYGQREDVKIPGQ.

Substrate contacts are provided by Ile94 and Asn120. Residues 175–176, Asp196, 231–235, Thr257, Asp283, and 312–315 contribute to the NAD(+) site; these read RI, PLHES, and HMSG.

The protein belongs to the D-isomer specific 2-hydroxyacid dehydrogenase family. FDH subfamily. In terms of assembly, homodimer.

It is found in the cytoplasm. It carries out the reaction formate + NAD(+) = CO2 + NADH. In terms of biological role, catalyzes the NAD(+)-dependent oxidation of formate to carbon dioxide. Formate oxidation is the final step in the methanol oxidation pathway in methylotrophic microorganisms. Has a role in the detoxification of exogenous formate in non-methylotrophic organisms. In Chaetomium thermophilum (strain DSM 1495 / CBS 144.50 / IMI 039719) (Thermochaetoides thermophila), this protein is Formate dehydrogenase.